A 48-amino-acid polypeptide reads, in one-letter code: MRVKINLKCSSCGSKNYLTSKNKSNHPDKIEVPKYCPKERKVTLHIES.

Belongs to the bacterial ribosomal protein bL33 family.

This Streptococcus agalactiae serotype V (strain ATCC BAA-611 / 2603 V/R) protein is Large ribosomal subunit protein bL33A.